The following is a 535-amino-acid chain: Peroxisomal membrane protein PEX29 (535 aa).

Transmembrane regions (helical) follow at residues 139–159 (LSVP…SKPL) and 176–196 (ILLL…PAYM). A glycan (N-linked (GlcNAc...) asparagine) is linked at Asn-239. A helical transmembrane segment spans residues 247–267 (MLLYVMSYDFVTSLIVKYLYF). Asn-271 carries N-linked (GlcNAc...) asparagine glycosylation. Transmembrane regions (helical) follow at residues 272-292 (ITIF…LFGA) and 297-317 (AMLP…TIAM). Residues Asn-450 and Asn-515 are each glycosylated (N-linked (GlcNAc...) asparagine). A disordered region spans residues 511–535 (AHRRNKSMESSNSLHPVKSIDSVDG).

It belongs to the PEX28-32 family. PEX29 subfamily.

It localises to the endoplasmic reticulum membrane. In terms of biological role, with PEX23, contributes to the formation of endoplasmic reticulum-mitochondria junctions which are important for mitochondrial function. Involved in lipid dropplets formation. This Ogataea parapolymorpha (strain ATCC 26012 / BCRC 20466 / JCM 22074 / NRRL Y-7560 / DL-1) (Yeast) protein is Peroxisomal membrane protein PEX29.